We begin with the raw amino-acid sequence, 332 residues long: Ribose-phosphate pyrophosphokinase (332 aa).

57–59 provides a ligand contact to ATP; sequence DGE. Mg(2+)-binding residues include H150 and D189. K213 is an active-site residue. D-ribose 5-phosphate contacts are provided by residues R215, D239, and 243-247; that span reads DTAGT.

This sequence belongs to the ribose-phosphate pyrophosphokinase family. Class I subfamily. Homohexamer. The cofactor is Mg(2+).

It is found in the cytoplasm. The enzyme catalyses D-ribose 5-phosphate + ATP = 5-phospho-alpha-D-ribose 1-diphosphate + AMP + H(+). Its pathway is metabolic intermediate biosynthesis; 5-phospho-alpha-D-ribose 1-diphosphate biosynthesis; 5-phospho-alpha-D-ribose 1-diphosphate from D-ribose 5-phosphate (route I): step 1/1. Its function is as follows. Involved in the biosynthesis of the central metabolite phospho-alpha-D-ribosyl-1-pyrophosphate (PRPP) via the transfer of pyrophosphoryl group from ATP to 1-hydroxyl of ribose-5-phosphate (Rib-5-P). In Gloeobacter violaceus (strain ATCC 29082 / PCC 7421), this protein is Ribose-phosphate pyrophosphokinase.